We begin with the raw amino-acid sequence, 165 residues long: ATP synthase subunit b (165 aa).

The helical transmembrane segment at 11–31 (LIFWTIVNFLLLVFLLGKFAW) threads the bilayer.

Belongs to the ATPase B chain family. F-type ATPases have 2 components, F(1) - the catalytic core - and F(0) - the membrane proton channel. F(1) has five subunits: alpha(3), beta(3), gamma(1), delta(1), epsilon(1). F(0) has three main subunits: a(1), b(2) and c(10-14). The alpha and beta chains form an alternating ring which encloses part of the gamma chain. F(1) is attached to F(0) by a central stalk formed by the gamma and epsilon chains, while a peripheral stalk is formed by the delta and b chains.

It is found in the cell membrane. In terms of biological role, f(1)F(0) ATP synthase produces ATP from ADP in the presence of a proton or sodium gradient. F-type ATPases consist of two structural domains, F(1) containing the extramembraneous catalytic core and F(0) containing the membrane proton channel, linked together by a central stalk and a peripheral stalk. During catalysis, ATP synthesis in the catalytic domain of F(1) is coupled via a rotary mechanism of the central stalk subunits to proton translocation. Its function is as follows. Component of the F(0) channel, it forms part of the peripheral stalk, linking F(1) to F(0). The sequence is that of ATP synthase subunit b from Elusimicrobium minutum (strain Pei191).